We begin with the raw amino-acid sequence, 314 residues long: Methionyl-tRNA formyltransferase (314 aa).

110–113 (SLLP) is a (6S)-5,6,7,8-tetrahydrofolate binding site.

It belongs to the Fmt family.

The catalysed reaction is L-methionyl-tRNA(fMet) + (6R)-10-formyltetrahydrofolate = N-formyl-L-methionyl-tRNA(fMet) + (6S)-5,6,7,8-tetrahydrofolate + H(+). In terms of biological role, attaches a formyl group to the free amino group of methionyl-tRNA(fMet). The formyl group appears to play a dual role in the initiator identity of N-formylmethionyl-tRNA by promoting its recognition by IF2 and preventing the misappropriation of this tRNA by the elongation apparatus. In Bacillus cereus (strain ATCC 14579 / DSM 31 / CCUG 7414 / JCM 2152 / NBRC 15305 / NCIMB 9373 / NCTC 2599 / NRRL B-3711), this protein is Methionyl-tRNA formyltransferase.